The following is a 454-amino-acid chain: Histidine--tRNA ligase (454 aa).

The protein belongs to the class-II aminoacyl-tRNA synthetase family. As to quaternary structure, homodimer.

It localises to the cytoplasm. The catalysed reaction is tRNA(His) + L-histidine + ATP = L-histidyl-tRNA(His) + AMP + diphosphate + H(+). In Phocaeicola vulgatus (strain ATCC 8482 / DSM 1447 / JCM 5826 / CCUG 4940 / NBRC 14291 / NCTC 11154) (Bacteroides vulgatus), this protein is Histidine--tRNA ligase.